A 356-amino-acid polypeptide reads, in one-letter code: NADH-quinone oxidoreductase subunit H (356 aa).

8 consecutive transmembrane segments (helical) span residues 18-38 (IVMV…IAYI), 87-107 (GVFL…WAVI), 120-140 (VGIL…IMGG), 166-186 (IGFV…SAIV), 202-222 (WLTF…VFYV), 257-277 (LFML…AILF), 292-312 (WVPG…LIAM), and 333-353 (FLPL…FAGI).

Belongs to the complex I subunit 1 family. In terms of assembly, NDH-1 is composed of 14 different subunits. Subunits NuoA, H, J, K, L, M, N constitute the membrane sector of the complex.

The protein localises to the cell inner membrane. The catalysed reaction is a quinone + NADH + 5 H(+)(in) = a quinol + NAD(+) + 4 H(+)(out). Functionally, NDH-1 shuttles electrons from NADH, via FMN and iron-sulfur (Fe-S) centers, to quinones in the respiratory chain. The immediate electron acceptor for the enzyme in this species is believed to be ubiquinone. Couples the redox reaction to proton translocation (for every two electrons transferred, four hydrogen ions are translocated across the cytoplasmic membrane), and thus conserves the redox energy in a proton gradient. This subunit may bind ubiquinone. The sequence is that of NADH-quinone oxidoreductase subunit H from Nitrobacter winogradskyi (strain ATCC 25391 / DSM 10237 / CIP 104748 / NCIMB 11846 / Nb-255).